Consider the following 263-residue polypeptide: Phosphatidylserine decarboxylase proenzyme (263 aa).

Active-site charge relay system; for autoendoproteolytic cleavage activity residues include Asp90, His146, and Ser230. Residue Ser230 is the Schiff-base intermediate with substrate; via pyruvic acid; for decarboxylase activity of the active site. Ser230 is subject to Pyruvic acid (Ser); by autocatalysis.

Belongs to the phosphatidylserine decarboxylase family. PSD-B subfamily. Prokaryotic type I sub-subfamily. In terms of assembly, heterodimer of a large membrane-associated beta subunit and a small pyruvoyl-containing alpha subunit. It depends on pyruvate as a cofactor. In terms of processing, is synthesized initially as an inactive proenzyme. Formation of the active enzyme involves a self-maturation process in which the active site pyruvoyl group is generated from an internal serine residue via an autocatalytic post-translational modification. Two non-identical subunits are generated from the proenzyme in this reaction, and the pyruvate is formed at the N-terminus of the alpha chain, which is derived from the carboxyl end of the proenzyme. The autoendoproteolytic cleavage occurs by a canonical serine protease mechanism, in which the side chain hydroxyl group of the serine supplies its oxygen atom to form the C-terminus of the beta chain, while the remainder of the serine residue undergoes an oxidative deamination to produce ammonia and the pyruvoyl prosthetic group on the alpha chain. During this reaction, the Ser that is part of the protease active site of the proenzyme becomes the pyruvoyl prosthetic group, which constitutes an essential element of the active site of the mature decarboxylase.

The protein resides in the cell membrane. It catalyses the reaction a 1,2-diacyl-sn-glycero-3-phospho-L-serine + H(+) = a 1,2-diacyl-sn-glycero-3-phosphoethanolamine + CO2. The protein operates within phospholipid metabolism; phosphatidylethanolamine biosynthesis; phosphatidylethanolamine from CDP-diacylglycerol: step 2/2. Its function is as follows. Catalyzes the formation of phosphatidylethanolamine (PtdEtn) from phosphatidylserine (PtdSer). This Bacillus subtilis (strain 168) protein is Phosphatidylserine decarboxylase proenzyme.